We begin with the raw amino-acid sequence, 447 residues long: GTPase Der (447 aa).

2 consecutive EngA-type G domains span residues 4 to 165 and 180 to 357; these read QIIT…PEEE and LQIV…KIWN. GTP-binding positions include 10–17, 57–61, 119–122, 186–193, 233–237, and 298–301; these read GRPNVGKS, DTPGL, NKCE, GRPNAGKS, DTAGL, and NKWD. The KH-like domain maps to 358 to 443; the sequence is KKITTSKLNE…PIRFIYVKTK (86 aa).

It belongs to the TRAFAC class TrmE-Era-EngA-EngB-Septin-like GTPase superfamily. EngA (Der) GTPase family. Associates with the 50S ribosomal subunit.

Functionally, GTPase that plays an essential role in the late steps of ribosome biogenesis. In Rickettsia africae (strain ESF-5), this protein is GTPase Der.